The following is a 98-amino-acid chain: Large ribosomal subunit protein uL23 (98 aa).

Belongs to the universal ribosomal protein uL23 family. In terms of assembly, part of the 50S ribosomal subunit. Contacts protein L29, and trigger factor when it is bound to the ribosome.

In terms of biological role, one of the early assembly proteins it binds 23S rRNA. One of the proteins that surrounds the polypeptide exit tunnel on the outside of the ribosome. Forms the main docking site for trigger factor binding to the ribosome. The protein is Large ribosomal subunit protein uL23 of Jannaschia sp. (strain CCS1).